A 486-amino-acid chain; its full sequence is G2/mitotic-specific cyclin-4 (486 aa).

Disordered stretches follow at residues 1–80 and 105–126; these read MRSY…SSNK and VLLN…DKEN. Over residues 25–41 the composition is skewed to polar residues; sequence ANLSSNHTTAGQPSTSS. A compositionally biased stretch (acidic residues) spans 108-123; that stretch reads NDDDDETDDEFDDEED. The stretch at 122 to 184 forms a coiled coil; sequence EDKENRYHDL…QSHTQDMRSI (63 aa). Residues 234–359 enclose the Cyclin N-terminal domain; that stretch reads EIFNYLHELE…FMIDVLEFDL (126 aa).

The protein belongs to the cyclin family. Cyclin AB subfamily. Interacts with IQG1.

In terms of biological role, 2/mitotic-specific cyclin essential for the control of the cell cycle at the G2/M (mitosis) transition. G2/M cyclins accumulate steadily during G2 and are abruptly destroyed at mitosis. Degradation is necessary for the cell to exit from mitosis. Plays a role in morphogenesis by negatively regulating polarized growth. Through binding to CDC28 regulates cytokinesis, partly by phosphorylation of the actomyosin ring component IQG1. This chain is G2/mitotic-specific cyclin-4 (CLB4), found in Candida albicans (strain SC5314 / ATCC MYA-2876) (Yeast).